The primary structure comprises 150 residues: Large ribosomal subunit protein uL13 (150 aa).

This sequence belongs to the universal ribosomal protein uL13 family. As to quaternary structure, part of the 50S ribosomal subunit.

This protein is one of the early assembly proteins of the 50S ribosomal subunit, although it is not seen to bind rRNA by itself. It is important during the early stages of 50S assembly. In Sulfurihydrogenibium sp. (strain YO3AOP1), this protein is Large ribosomal subunit protein uL13.